The chain runs to 89 residues: Small ribosomal subunit protein uS15 (89 aa).

This sequence belongs to the universal ribosomal protein uS15 family. Part of the 30S ribosomal subunit. Forms a bridge to the 50S subunit in the 70S ribosome, contacting the 23S rRNA.

One of the primary rRNA binding proteins, it binds directly to 16S rRNA where it helps nucleate assembly of the platform of the 30S subunit by binding and bridging several RNA helices of the 16S rRNA. Functionally, forms an intersubunit bridge (bridge B4) with the 23S rRNA of the 50S subunit in the ribosome. This Nostoc punctiforme (strain ATCC 29133 / PCC 73102) protein is Small ribosomal subunit protein uS15.